The following is a 1141-amino-acid chain: DNA-directed RNA polymerase subunit beta (1141 aa).

It belongs to the RNA polymerase beta chain family. The RNAP catalytic core consists of 2 alpha, 1 beta, 1 beta' and 1 omega subunit. When a sigma factor is associated with the core the holoenzyme is formed, which can initiate transcription.

It carries out the reaction RNA(n) + a ribonucleoside 5'-triphosphate = RNA(n+1) + diphosphate. Its function is as follows. DNA-dependent RNA polymerase catalyzes the transcription of DNA into RNA using the four ribonucleoside triphosphates as substrates. This Parafrankia sp. (strain EAN1pec) protein is DNA-directed RNA polymerase subunit beta.